We begin with the raw amino-acid sequence, 224 residues long: Putative adhesin A1G_07050 (224 aa).

The N-terminal stretch at 1–22 (MKKLLLIAATSATILSSSVSFA) is a signal peptide.

This Rickettsia rickettsii (strain Sheila Smith) protein is Putative adhesin A1G_07050.